The following is an 82-amino-acid chain: Cytochrome b559 subunit alpha (82 aa).

The chain crosses the membrane as a helical span at residues 22–36 (IIHAVTLPAIFIAGF). H24 is a heme binding site.

This sequence belongs to the PsbE/PsbF family. As to quaternary structure, heterodimer of an alpha subunit and a beta subunit. PSII is composed of 1 copy each of membrane proteins PsbA, PsbB, PsbC, PsbD, PsbE, PsbF, PsbH, PsbI, PsbJ, PsbK, PsbL, PsbM, PsbT, PsbX, PsbY, Psb30/Ycf12, peripheral proteins PsbO, CyanoQ (PsbQ), PsbU, PsbV and a large number of cofactors. It forms dimeric complexes. It depends on heme b as a cofactor.

It is found in the cellular thylakoid membrane. Its function is as follows. This b-type cytochrome is tightly associated with the reaction center of photosystem II (PSII). PSII is a light-driven water:plastoquinone oxidoreductase that uses light energy to abstract electrons from H(2)O, generating O(2) and a proton gradient subsequently used for ATP formation. It consists of a core antenna complex that captures photons, and an electron transfer chain that converts photonic excitation into a charge separation. This Prochlorococcus marinus (strain SARG / CCMP1375 / SS120) protein is Cytochrome b559 subunit alpha.